The primary structure comprises 90 residues: PqqA binding protein 2 (90 aa).

This sequence belongs to the PqqD family. As to quaternary structure, monomer. Interacts with PqqE.

It functions in the pathway cofactor biosynthesis; pyrroloquinoline quinone biosynthesis. In terms of biological role, functions as a PqqA binding protein and presents PqqA to PqqE, in the pyrroloquinoline quinone (PQQ) biosynthetic pathway. The chain is PqqA binding protein 2 (pqqD2) from Pseudomonas putida (strain ATCC 47054 / DSM 6125 / CFBP 8728 / NCIMB 11950 / KT2440).